The following is a 213-amino-acid chain: Large ribosomal subunit protein uL1 (213 aa).

It belongs to the universal ribosomal protein uL1 family. In terms of assembly, part of the 50S ribosomal subunit.

Binds directly to 23S rRNA. Probably involved in E site tRNA release. In terms of biological role, protein L1 is also a translational repressor protein, it controls the translation of its operon by binding to its mRNA. The sequence is that of Large ribosomal subunit protein uL1 from Methanosarcina acetivorans (strain ATCC 35395 / DSM 2834 / JCM 12185 / C2A).